The primary structure comprises 346 residues: L-threonine 3-dehydrogenase (346 aa).

C42 is a Zn(2+) binding site. Catalysis depends on charge relay system residues T44 and H47. Positions 67, 68, 97, 100, 103, and 111 each coordinate Zn(2+). NAD(+)-binding positions include I179, D199, R204, 266–268 (LSL), and 291–292 (IT).

This sequence belongs to the zinc-containing alcohol dehydrogenase family. In terms of assembly, homotetramer. It depends on Zn(2+) as a cofactor.

Its subcellular location is the cytoplasm. The catalysed reaction is L-threonine + NAD(+) = (2S)-2-amino-3-oxobutanoate + NADH + H(+). The protein operates within amino-acid degradation; L-threonine degradation via oxydo-reductase pathway; glycine from L-threonine: step 1/2. In terms of biological role, catalyzes the NAD(+)-dependent oxidation of L-threonine to 2-amino-3-ketobutyrate. The chain is L-threonine 3-dehydrogenase from Bacillus licheniformis (strain ATCC 14580 / DSM 13 / JCM 2505 / CCUG 7422 / NBRC 12200 / NCIMB 9375 / NCTC 10341 / NRRL NRS-1264 / Gibson 46).